The sequence spans 141 residues: MSYYSGYSGGLGYGYGSSFGGLGCGCNSIRRLGCGSGYGGFGYGSGYGGFGGFGYGSGYGGYGYGSGYGGFGGFGYGSGYGGFGYGSGYGGFGGFGYGSGYGGYGYGSGFGGYGYGSGFRGYGCGCRRSSCCGGYGFSSFY.

The interval 5-135 (SGYSGGLGYG…CRRSSCCGGY (131 aa)) is 48 X 2 AA repeats of G-[YCGS].

It belongs to the KRTAP type 19 family. As to quaternary structure, interacts with hair keratins. Strong expression in narrowly defined pattern restricted to the lower and middle cortical regions of the hair shaft in both developing and cycling hair. During hair follicle regression (catagen), expression levels decrease until expression is no longer detectable in follicles at resting stage (telogen).

Its function is as follows. In the hair cortex, hair keratin intermediate filaments are embedded in an interfilamentous matrix, consisting of hair keratin-associated proteins (KRTAP), which are essential for the formation of a rigid and resistant hair shaft through their extensive disulfide bond cross-linking with abundant cysteine residues of hair keratins. The matrix proteins include the high-sulfur and high-glycine-tyrosine keratins. The chain is Keratin-associated protein 19-2 (Krtap19-2) from Mus musculus (Mouse).